We begin with the raw amino-acid sequence, 137 residues long: MLLPKRTKYRRPHRIKYEGKAKGNTKVDFGEFGLKSLDGAWITNRQIEAARIAMTRYMKRWGKVWIRIFPHMAKTKKPLEVRMGSGKGSPEEWVAVVKTGTVMFEVAGVSEETAREALRLAMHKLPVRCKIVKKGEE.

The protein belongs to the universal ribosomal protein uL16 family. Part of the 50S ribosomal subunit.

In terms of biological role, binds 23S rRNA and is also seen to make contacts with the A and possibly P site tRNAs. The sequence is that of Large ribosomal subunit protein uL16 from Spiroplasma citri.